Reading from the N-terminus, the 130-residue chain is Small ribosomal subunit protein uS8 (130 aa).

It belongs to the universal ribosomal protein uS8 family. In terms of assembly, part of the 30S ribosomal subunit. Contacts proteins S5 and S12.

Functionally, one of the primary rRNA binding proteins, it binds directly to 16S rRNA central domain where it helps coordinate assembly of the platform of the 30S subunit. In Aeromonas salmonicida (strain A449), this protein is Small ribosomal subunit protein uS8.